The following is a 503-amino-acid chain: Maturase K (503 aa).

The protein belongs to the intron maturase 2 family. MatK subfamily.

Its subcellular location is the plastid. The protein localises to the chloroplast. In terms of biological role, usually encoded in the trnK tRNA gene intron. Probably assists in splicing its own and other chloroplast group II introns. The protein is Maturase K of Liquidambar orientalis (Oriental sweet gum).